We begin with the raw amino-acid sequence, 960 residues long: MSTSHHHHHPPYLITTLFFLFLNFSCLHANELELLLSFKSSIQDPLKHLSSWSYSSTNDVCLWSGVVCNNISRVVSLDLSGKNMSGQILTAATFRLPFLQTINLSNNNLSGPIPHDIFTTSSPSLRYLNLSNNNFSGSIPRGFLPNLYTLDLSNNMFTGEIYNDIGVFSNLRVLDLGGNVLTGHVPGYLGNLSRLEFLTLASNQLTGGVPVELGKMKNLKWIYLGYNNLSGEIPYQIGGLSSLNHLDLVYNNLSGPIPPSLGDLKKLEYMFLYQNKLSGQIPPSIFSLQNLISLDFSDNSLSGEIPELVAQMQSLEILHLFSNNLTGKIPEGVTSLPRLKVLQLWSNRFSGGIPANLGKHNNLTVLDLSTNNLTGKLPDTLCDSGHLTKLILFSNSLDSQIPPSLGMCQSLERVRLQNNGFSGKLPRGFTKLQLVNFLDLSNNNLQGNINTWDMPQLEMLDLSVNKFFGELPDFSRSKRLKKLDLSRNKISGVVPQGLMTFPEIMDLDLSENEITGVIPRELSSCKNLVNLDLSHNNFTGEIPSSFAEFQVLSDLDLSCNQLSGEIPKNLGNIESLVQVNISHNLLHGSLPFTGAFLAINATAVEGNIDLCSENSASGLRPCKVVRKRSTKSWWLIITSTFAAFLAVLVSGFFIVLVFQRTHNVLEVKKVEQEDGTKWETQFFDSKFMKSFTVNTILSSLKDQNVLVDKNGVHFVVKEVKKYDSLPEMISDMRKLSDHKNILKIVATCRSETVAYLIHEDVEGKRLSQVLSGLSWERRRKIMKGIVEALRFLHCRCSPAVVAGNLSPENIVIDVTDEPRLCLGLPGLLCMDAAYMAPETREHKEMTSKSDIYGFGILLLHLLTGKCSSSNEDIESGVNGSLVKWARYSYSNCHIDTWIDSSIDTSVHQREIVHVMNLALKCTAIDPQERPCTNNVLQALESTSSSSSSCTTYLSKILSLA.

An N-terminal signal peptide occupies residues 1-29 (MSTSHHHHHPPYLITTLFFLFLNFSCLHA). Topologically, residues 30–634 (NELELLLSFK…VRKRSTKSWW (605 aa)) are extracellular. Cysteines 61 and 68 form a disulfide. N-linked (GlcNAc...) asparagine glycosylation is found at Asn-70, Asn-83, Asn-103, Asn-108, Asn-129, and Asn-134. 22 LRR repeats span residues 71 to 96 (ISRV…TFRL), 97 to 120 (PFLQ…IFTT), 122 to 146 (SPSL…FLPN), 149 to 168 (TLDL…IGVF), 169 to 194 (SNLR…NLSR), 196 to 216 (EFLT…LGKM), 217 to 240 (KNLK…IGGL), 241 to 264 (SSLN…LGDL), 265 to 288 (KKLE…IFSL), 290 to 312 (NLIS…VAQM), 313 to 336 (QSLE…VTSL), 338 to 360 (RLKV…LGKH), 361 to 384 (NNLT…LCDS), 386 to 408 (HLTK…LGMC), 409 to 432 (QSLE…FTKL), 434 to 454 (LVNF…TWDM), 455 to 477 (PQLE…FSRS), 478 to 501 (KRLK…LMTF), 503 to 525 (EIMD…LSSC), 526 to 549 (KNLV…FAEF), 550 to 573 (QVLS…LGNI), and 575 to 598 (SLVQ…AFLA). Asn-191 carries an N-linked (GlcNAc...) asparagine glycan. The short motif at 221–226 (WIYLGY) is the CLE45 peptide binding element. N-linked (GlcNAc...) asparagine glycans are attached at residues Asn-228 and Asn-252. An N-linked (GlcNAc...) asparagine glycan is attached at Asn-324. 2 N-linked (GlcNAc...) asparagine glycosylation sites follow: Asn-362 and Asn-372. Asn-537 is a glycosylation site (N-linked (GlcNAc...) asparagine). 2 N-linked (GlcNAc...) asparagine glycosylation sites follow: Asn-580 and Asn-600. A helical transmembrane segment spans residues 635–655 (LIITSTFAAFLAVLVSGFFIV). The Cytoplasmic portion of the chain corresponds to 656–960 (LVFQRTHNVL…TYLSKILSLA (305 aa)). The 263-residue stretch at 691–953 (FTVNTILSSL…SSSSSCTTYL (263 aa)) folds into the Protein kinase domain. Residue Thr-692 is modified to Phosphothreonine. Residues 697 to 705 (LSSLKDQNV) and Lys-717 contribute to the ATP site. At Tyr-834 the chain carries Phosphotyrosine.

It belongs to the protein kinase superfamily. Ser/Thr protein kinase family. Self-interacts. Binds to CLE45 present in the pistil, particularly under relatively high temperature (at 30 degrees Celsius). Expressed in pollen grains and roots vascular tissues. Present in roots.

The protein localises to the cell membrane. It catalyses the reaction L-seryl-[protein] + ATP = O-phospho-L-seryl-[protein] + ADP + H(+). The enzyme catalyses L-threonyl-[protein] + ATP = O-phospho-L-threonyl-[protein] + ADP + H(+). Receptor with a serine/threonine-protein kinase activity. Together with SKM2, LRR-rich receptor-like kinase (LRR-RLK) required for male fertility by the perception of CLE43 and CLE45 peptides and the transduction of their promoting action in pollen tubes, especially under relatively high temperature (at 30 degrees Celsius), thus conferring tolerance against high temperature probably through the maintenance of mitochondrial activity. Seems to not be involved in the perception of CLE45 peptide in roots. This is Leucine-rich repeat receptor-like serine/threonine-protein kinase SKM1 from Arabidopsis thaliana (Mouse-ear cress).